A 298-amino-acid polypeptide reads, in one-letter code: Tyrosine recombinase XerC (298 aa).

The Core-binding (CB) domain maps to 1–84; sequence MNHIQEAFLN…TLRTFYEYWM (84 aa). The Tyr recombinase domain occupies 105-286; that stretch reads YLPQFFYEEE…SNQQLRKVYL (182 aa). Residues arginine 145, lysine 169, histidine 238, arginine 241, and histidine 264 contribute to the active site. Tyrosine 273 serves as the catalytic O-(3'-phospho-DNA)-tyrosine intermediate.

The protein belongs to the 'phage' integrase family. XerC subfamily. Forms a cyclic heterotetrameric complex composed of two molecules of XerC and two molecules of XerD.

It localises to the cytoplasm. Site-specific tyrosine recombinase, which acts by catalyzing the cutting and rejoining of the recombining DNA molecules. The XerC-XerD complex is essential to convert dimers of the bacterial chromosome into monomers to permit their segregation at cell division. It also contributes to the segregational stability of plasmids. This chain is Tyrosine recombinase XerC, found in Staphylococcus aureus (strain Mu3 / ATCC 700698).